The sequence spans 684 residues: UvrABC system protein B (684 aa).

The 159-residue stretch at 30 to 188 (EGVQRGDRWQ…QELVSLHYVR (159 aa)) folds into the Helicase ATP-binding domain. 43 to 50 (GVTGSGKT) serves as a coordination point for ATP. Positions 96 to 119 (YYDFYQPEAYLPALDKYIAKDLRI) match the Beta-hairpin motif. The Helicase C-terminal domain maps to 435 to 601 (QIDDLLGEIR…SIIKSVEQVL (167 aa)). Positions 641 to 676 (YSMAESLRLEMQEAALKMEYEKAAYLRDEITKFEHR) constitute a UVR domain.

This sequence belongs to the UvrB family. In terms of assembly, forms a heterotetramer with UvrA during the search for lesions. Interacts with UvrC in an incision complex.

Its subcellular location is the cytoplasm. Functionally, the UvrABC repair system catalyzes the recognition and processing of DNA lesions. A damage recognition complex composed of 2 UvrA and 2 UvrB subunits scans DNA for abnormalities. Upon binding of the UvrA(2)B(2) complex to a putative damaged site, the DNA wraps around one UvrB monomer. DNA wrap is dependent on ATP binding by UvrB and probably causes local melting of the DNA helix, facilitating insertion of UvrB beta-hairpin between the DNA strands. Then UvrB probes one DNA strand for the presence of a lesion. If a lesion is found the UvrA subunits dissociate and the UvrB-DNA preincision complex is formed. This complex is subsequently bound by UvrC and the second UvrB is released. If no lesion is found, the DNA wraps around the other UvrB subunit that will check the other stand for damage. The protein is UvrABC system protein B of Chlorobium limicola (strain DSM 245 / NBRC 103803 / 6330).